The primary structure comprises 37 residues: Small ribosomal subunit protein eS32 (37 aa).

It belongs to the eukaryotic ribosomal protein eS32 family. Part of the small ribosomal subunit.

Its function is as follows. Interacts with N(4)-acetylcytidine (ac(4)C) 1459 of the small rRNA; the acetyl group of ac(4)C1459 briges the interaction with this protein. The chain is Small ribosomal subunit protein eS32 (rpl41e) from Thermococcus kodakarensis (strain ATCC BAA-918 / JCM 12380 / KOD1) (Pyrococcus kodakaraensis (strain KOD1)).